The chain runs to 213 residues: Orotate phosphoribosyltransferase (213 aa).

K26 is a 5-phospho-alpha-D-ribose 1-diphosphate binding site. Residue 34–35 (FF) coordinates orotate. Residues 72-73 (YK), R98, K99, K102, and 123-131 (DDVISAGTS) each bind 5-phospho-alpha-D-ribose 1-diphosphate. Orotate contacts are provided by S127 and R155.

It belongs to the purine/pyrimidine phosphoribosyltransferase family. PyrE subfamily. Homodimer. Requires Mg(2+) as cofactor.

It carries out the reaction orotidine 5'-phosphate + diphosphate = orotate + 5-phospho-alpha-D-ribose 1-diphosphate. It functions in the pathway pyrimidine metabolism; UMP biosynthesis via de novo pathway; UMP from orotate: step 1/2. Functionally, catalyzes the transfer of a ribosyl phosphate group from 5-phosphoribose 1-diphosphate to orotate, leading to the formation of orotidine monophosphate (OMP). This chain is Orotate phosphoribosyltransferase, found in Neisseria gonorrhoeae (strain ATCC 700825 / FA 1090).